An 89-amino-acid polypeptide reads, in one-letter code: Large ribosomal subunit protein eL34 (89 aa).

A disordered region spans residues 1-22; sequence MPAPRYKSGSSKKVYRKAPGNS.

This sequence belongs to the eukaryotic ribosomal protein eL34 family.

The chain is Large ribosomal subunit protein eL34 from Methanococcus maripaludis (strain DSM 14266 / JCM 13030 / NBRC 101832 / S2 / LL).